The chain runs to 392 residues: Phosphoprotein (392 aa).

Disordered regions lie at residues 61–107 and 152–182; these read ESTN…GLDS and PIAT…DGWE. Positions 217-280 are multimerization; the sequence is LNVNEILNTV…ITTVKIMDPG (64 aa). Positions 219–246 form a coiled coil; it reads VNEILNTVRNLDSRMNQLETKVDRILSS.

It belongs to the rubulavirus/avulavirus P protein family. Homotetramer. Interacts (via multimerization domain) with polymerase L; this interaction forms the polymerase L-P complex. Interacts (via N-terminus) with N0 (via Ncore); this interaction allows P to chaperon N0 to avoid N polymerization before encapsidation. Interacts (via C-terminus) with N-RNA template; this interaction positions the polymerase on the template for both transcription and replication.

In terms of biological role, essential cofactor of the RNA polymerase L that plays a central role in the transcription and replication by forming the polymerase complex with RNA polymerase L and recruiting L to the genomic N-RNA template for RNA synthesis. Also plays a central role in the encapsidation of nascent RNA chains by forming the encapsidation complex with the nucleocapsid protein N (N-P complex). Acts as a chaperone for newly synthesized free N protein, so-called N0, allowing encapsidation of nascent RNA chains during replication. The nucleoprotein protein N prevents excessive phosphorylation of P, which leads to down-regulation of viral transcription/ replication. Participates, together with N, in the formation of viral factories (viroplasms), which are large inclusions in the host cytoplasm where replication takes place. This chain is Phosphoprotein (P/V), found in Canis lupus familiaris (Dog).